A 42-amino-acid chain; its full sequence is Photosystem I reaction center subunit IX (42 aa).

Residues 7–27 form a helical membrane-spanning segment; the sequence is YLSVAPVLSTLWFGALAGLLI.

This sequence belongs to the PsaJ family.

The protein localises to the plastid. Its subcellular location is the chloroplast thylakoid membrane. Functionally, may help in the organization of the PsaE and PsaF subunits. This chain is Photosystem I reaction center subunit IX, found in Platanus occidentalis (Sycamore).